We begin with the raw amino-acid sequence, 562 residues long: Proton channel OTOP2 (562 aa).

The segment at 1–20 (MSEELAQGPKESPPAPRAGP) is disordered. A run of 12 helical transmembrane segments spans residues 30–50 (LLSVLLAVNVLLLACTLISGG), 62–82 (VFALLTAMMLLATLWILFYLL), 100–120 (PIWLRGGLVLFGICTLIMDVF), 137–157 (ILHPLIQAVFVIIQTYFLWVS), 169–189 (TWCGLMFTLTTNLAIWMAAVV), 241–261 (FYLYPFNIEYSLFASTMLYVM), 289–309 (FFAGPVLGLLLFVVGLAVFII), 324–344 (ALVIYYSFNIVCLGLTTLVSL), 371–391 (LLMGAALGQYAISYYSIVAVV), 402–422 (LNLTHALLMIAQHTFQNMFII), 495–515 (DISLFLLLCNVILWIMPAFGA), and 527–547 (FYGYSLWAVIVNICLPFGIFY).

This sequence belongs to the otopetrin family.

The protein resides in the cell membrane. It carries out the reaction H(+)(in) = H(+)(out). Its activity is regulated as follows. Actives at neutral and alkaline extracellular pH, acid extracellular pH appears to inhibit the channel. Insensitive to activation by Zn(2+). In terms of biological role, proton-selective ion channel open at neutral pH. Actives at neutral and alkaline extracellular pH, likely participates in some alkali-related physiological activities. The sequence is that of Proton channel OTOP2 from Homo sapiens (Human).